Reading from the N-terminus, the 380-residue chain is Erythronate-4-phosphate dehydrogenase (380 aa).

Substrate contacts are provided by S45 and T66. NAD(+)-binding positions include D146, T174, 205-207 (ASR), and D231. Residue R207 is part of the active site. E236 is a catalytic residue. The Proton donor role is filled by H253. G256 contacts NAD(+). Y257 is a binding site for substrate.

This sequence belongs to the D-isomer specific 2-hydroxyacid dehydrogenase family. PdxB subfamily. Homodimer.

The protein resides in the cytoplasm. The enzyme catalyses 4-phospho-D-erythronate + NAD(+) = (R)-3-hydroxy-2-oxo-4-phosphooxybutanoate + NADH + H(+). It functions in the pathway cofactor biosynthesis; pyridoxine 5'-phosphate biosynthesis; pyridoxine 5'-phosphate from D-erythrose 4-phosphate: step 2/5. Functionally, catalyzes the oxidation of erythronate-4-phosphate to 3-hydroxy-2-oxo-4-phosphonooxybutanoate. In Pseudomonas fluorescens (strain SBW25), this protein is Erythronate-4-phosphate dehydrogenase.